The primary structure comprises 345 residues: S-adenosylmethionine:tRNA ribosyltransferase-isomerase (345 aa).

Belongs to the QueA family. In terms of assembly, monomer.

Its subcellular location is the cytoplasm. It carries out the reaction 7-aminomethyl-7-carbaguanosine(34) in tRNA + S-adenosyl-L-methionine = epoxyqueuosine(34) in tRNA + adenine + L-methionine + 2 H(+). The protein operates within tRNA modification; tRNA-queuosine biosynthesis. Functionally, transfers and isomerizes the ribose moiety from AdoMet to the 7-aminomethyl group of 7-deazaguanine (preQ1-tRNA) to give epoxyqueuosine (oQ-tRNA). In Helicobacter acinonychis (strain Sheeba), this protein is S-adenosylmethionine:tRNA ribosyltransferase-isomerase.